Reading from the N-terminus, the 128-residue chain is Histone H2A type 1-J (128 aa).

Residues 1–22 (MSGRGKQGGKARAKAKTRSSRA) are disordered. Serine 2 carries the N-acetylserine modification. Serine 2 is subject to Phosphoserine; by RPS6KA5. Arginine 4 bears the Citrulline; alternate mark. Symmetric dimethylarginine; by PRMT5; alternate is present on arginine 4. Lysine 6 is subject to N6-(2-hydroxyisobutyryl)lysine. The segment covering 7 to 19 (QGGKARAKAKTRS) has biased composition (basic residues). Lysine 10 carries the post-translational modification N6-(2-hydroxyisobutyryl)lysine; alternate. N6-(beta-hydroxybutyryl)lysine; alternate is present on residues lysine 10 and lysine 14. Lysine 10 bears the N6-lactoyllysine; alternate mark. Position 10 is an N6-succinyllysine; alternate (lysine 10). Lysine 14 participates in a covalent cross-link: Glycyl lysine isopeptide (Lys-Gly) (interchain with G-Cter in ubiquitin); alternate. Lysine 16 participates in a covalent cross-link: Glycyl lysine isopeptide (Lys-Gly) (interchain with G-Cter in ubiquitin). Lysine 37 carries the N6-(2-hydroxyisobutyryl)lysine; alternate modification. At lysine 37 the chain carries N6-(beta-hydroxybutyryl)lysine; alternate. Lysine 37 bears the N6-crotonyllysine; alternate mark. Residues lysine 75 and lysine 76 each carry the N6-(2-hydroxyisobutyryl)lysine modification. Lysine 96 is modified (N6-(2-hydroxyisobutyryl)lysine; alternate). Lysine 96 is subject to N6-(beta-hydroxybutyryl)lysine; alternate. Lysine 96 is modified (N6-succinyllysine; alternate). At lysine 96 the chain carries N6-glutaryllysine; alternate. N6-glutaryllysine is present on lysine 100. Glutamine 105 is subject to N5-methylglutamine. At lysine 119 the chain carries N6-(2-hydroxyisobutyryl)lysine; alternate. At lysine 119 the chain carries N6-(beta-hydroxybutyryl)lysine; alternate. Lysine 119 and lysine 120 each carry N6-crotonyllysine; alternate. Lysine 119 and lysine 120 each carry N6-glutaryllysine; alternate. Lysine 120 participates in a covalent cross-link: Glycyl lysine isopeptide (Lys-Gly) (interchain with G-Cter in ubiquitin); alternate. Threonine 121 carries the post-translational modification Phosphothreonine; by DCAF1. Position 126 is an N6-crotonyllysine; alternate (lysine 126). Lysine 126 carries the post-translational modification N6-glutaryllysine; alternate.

It belongs to the histone H2A family. As to quaternary structure, the nucleosome is a histone octamer containing two molecules each of H2A, H2B, H3 and H4 assembled in one H3-H4 heterotetramer and two H2A-H2B heterodimers. The octamer wraps approximately 147 bp of DNA. Post-translationally, deiminated on Arg-4 in granulocytes upon calcium entry. Monoubiquitination of Lys-120 (H2AK119Ub) by RING1, TRIM37 and RNF2/RING2 complex gives a specific tag for epigenetic transcriptional repression and participates in X chromosome inactivation of female mammals. It is involved in the initiation of both imprinted and random X inactivation. Ubiquitinated H2A is enriched in inactive X chromosome chromatin. Ubiquitination of H2A functions downstream of methylation of 'Lys-27' of histone H3 (H3K27me). H2AK119Ub by RNF2/RING2 can also be induced by ultraviolet and may be involved in DNA repair. Monoubiquitination of Lys-120 (H2AK119Ub) by TRIM37 may promote transformation of cells in a number of breast cancers. Following DNA double-strand breaks (DSBs), it is ubiquitinated through 'Lys-63' linkage of ubiquitin moieties by the E2 ligase UBE2N and the E3 ligases RNF8 and RNF168, leading to the recruitment of repair proteins to sites of DNA damage. Ubiquitination at Lys-14 and Lys-16 (H2AK13Ub and H2AK15Ub, respectively) in response to DNA damage is initiated by RNF168 that mediates monoubiquitination at these 2 sites, and 'Lys-63'-linked ubiquitin are then conjugated to monoubiquitin; RNF8 is able to extend 'Lys-63'-linked ubiquitin chains in vitro. Deubiquitinated by USP51 at Lys-14 and Lys-16 (H2AK13Ub and H2AK15Ub, respectively) after damaged DNA is repaired. H2AK119Ub and ionizing radiation-induced 'Lys-63'-linked ubiquitination (H2AK13Ub and H2AK15Ub) are distinct events. In terms of processing, phosphorylation on Ser-2 (H2AS1ph) is enhanced during mitosis. Phosphorylation on Ser-2 by RPS6KA5/MSK1 directly represses transcription. Acetylation of H3 inhibits Ser-2 phosphorylation by RPS6KA5/MSK1. Phosphorylation at Thr-121 (H2AT120ph) by DCAF1 is present in the regulatory region of many tumor suppresor genes and down-regulates their transcription. Post-translationally, glutamine methylation at Gln-105 (H2AQ104me) by FBL is specifically dedicated to polymerase I. It is present at 35S ribosomal DNA locus and impairs binding of the FACT complex. Symmetric dimethylation on Arg-4 by the PRDM1/PRMT5 complex may play a crucial role in the germ-cell lineage. In terms of processing, crotonylation (Kcr) is specifically present in male germ cells and marks testis-specific genes in post-meiotic cells, including X-linked genes that escape sex chromosome inactivation in haploid cells. Crotonylation marks active promoters and enhancers and confers resistance to transcriptional repressors. It is also associated with post-meiotically activated genes on autosomes. Post-translationally, lactylated in macrophages by EP300/P300 by using lactoyl-CoA directly derived from endogenous or exogenous lactate, leading to stimulates gene transcription.

The protein localises to the nucleus. The protein resides in the chromosome. Core component of nucleosome. Nucleosomes wrap and compact DNA into chromatin, limiting DNA accessibility to the cellular machineries which require DNA as a template. Histones thereby play a central role in transcription regulation, DNA repair, DNA replication and chromosomal stability. DNA accessibility is regulated via a complex set of post-translational modifications of histones, also called histone code, and nucleosome remodeling. The polypeptide is Histone H2A type 1-J (Homo sapiens (Human)).